We begin with the raw amino-acid sequence, 333 residues long: Sphingomyelinase C (333 aa).

The first 27 residues, 1–27 (MKGKLLKGVLSLGVGLGALYSGTSAQA), serve as a signal peptide directing secretion. Residues cysteine 150 and cysteine 186 are joined by a disulfide bond.

The protein belongs to the neutral sphingomyelinase family. It depends on Mg(2+) as a cofactor.

The protein resides in the secreted. It catalyses the reaction a sphingomyelin + H2O = phosphocholine + an N-acylsphing-4-enine + H(+). With respect to regulation, activated by cobalt and manganese ions. Its function is as follows. Required, with sphingomyelinase, to effect target cell lysis (hemolysis). The chain is Sphingomyelinase C (sph) from Bacillus cereus.